Consider the following 942-residue polypeptide: MRSYSNPENGGQINDNINYSEKRPTMLPENLSLSNYDMDSFLGQFPSDNNMQLPHSTYEQHLQGEQQNPTNPNYFPPEFDENKVDWKQEKPKPDAPSFADNNSFDNVNSSKLTNPSPVQPNIVKSESEPANSKQNEVVEATSVEKAKENVAHESGTPESGGSTSAPKSKKQRLTADQLAYLLREFSKDTNPPPAIREKIGRELNIPERSVTIWFQNRRAKSKLISRRQEEERQRILREQRELDSLNQKVSQAFAHEVLSTSPTSPYVGGIAANRQYANTLLPKPTRKTGNFYMKSGPMQSSMEPCIAESDIPIRQSLSSTYYNSLSPNAVPVSSQRKYSASSYSAIPNAMSVSNQAFDVESPPSSYATPLTGIRMPQPESDLYSYPREVSPSSGGYRMFGHSKPSSYKASGPVRPPNMATGHMRTSSEPTSYDSEFYYFSCTLLVIGLWKRLRASPQDLMCFYSPPKKLFAYLIQFQGIQYRIEYSFFVIESIHVFRVEEPLLNELSATASSRDKPAPNEYWLQMDIQLSVPPVFHMITSEGQGNCTDFTEGNQASEVLLHSLMGRATSMFQMLDRVRRASPELGSVIRLQKGLNPHQFLDPQWANQLPRQPDSSVFDHQGRNPPIQGLSHDTSSEYGNKSQFKRLRSTSTPARQDLAQHLLPPKTNTEGLMHAQSVSPITQAMKSANVLEGSSTRLNSYEPSVSSAYPHHNLALNLDNTQFGELGTSNISYPLSAPSDVGSLPRASNSPSRPVMHPNTQGINTEIKDMAAQFPNSQTGGLTPNSWSMNTNVSVPFTTQNREFGGIGSSSISTTMNAPSQQLSQVPFGDVSLATENSVPSYGFEVPSEESVYAQARTNSSVSAGVAPRLFIQTPSIPLASSAGQDSNLIEKSSSGGVYASQPGASGYLSHDQSGSPFEDVYSPSAGIDFQKLRGQQFSPDMQ.

4 stretches are compositionally biased toward polar residues: residues 1–19 (MRSYSNPENGGQINDNINY), 61–73 (HLQGEQQNPTNPN), 99–116 (ADNNSFDNVNSSKLTNPS), and 122–135 (IVKSESEPANSKQN). 5 disordered regions span residues 1 to 54 (MRSY…MQLP), 61 to 80 (HLQGEQQNPTNPNYFPPEFD), 87 to 172 (KQEK…KKQR), 604 to 651 (WANQ…STST), and 892 to 922 (SSSGGVYASQPGASGYLSHDQSGSPFEDVYS). Residues 142-151 (SVEKAKENVA) show a composition bias toward basic and acidic residues. A compositionally biased stretch (low complexity) spans 153 to 164 (ESGTPESGGSTS). Positions 164-224 (SAPKSKKQRL…QNRRAKSKLI (61 aa)) form a DNA-binding region, homeobox. 2 stretches are compositionally biased toward polar residues: residues 604–614 (WANQLPRQPDS) and 630–641 (SHDTSSEYGNKS).

It localises to the nucleus. Trnascription factor that regulates the expression of the homocitrate synthase (HCS) lys4. The polypeptide is Homeobox transcription factor phx1 (phx1) (Schizosaccharomyces pombe (strain 972 / ATCC 24843) (Fission yeast)).